Consider the following 414-residue polypeptide: Peptide chain release factor subunit 1 (414 aa).

The protein belongs to the eukaryotic release factor 1 family. Heterodimer of two subunits, one of which binds GTP.

It localises to the cytoplasm. In terms of biological role, directs the termination of nascent peptide synthesis (translation) in response to the termination codons UAA, UAG and UGA. The chain is Peptide chain release factor subunit 1 from Methanococcoides burtonii (strain DSM 6242 / NBRC 107633 / OCM 468 / ACE-M).